A 740-amino-acid chain; its full sequence is ATP-dependent RNA helicase DDX1 (740 aa).

The necessary for interaction with HNRNPK stretch occupies residues Met-1–Ser-295. Residues Met-1–Val-448 form an interaction with dsRNA region. The interval Met-1 to Tyr-525 is necessary for interaction with RELA. The Helicase ATP-binding domain maps to Ala-2–Trp-428. Residue Ala-46–Thr-53 coordinates ATP. Residues Asp-70 to Phe-247 form the B30.2/SPRY domain. N6-acetyllysine occurs at positions 239 and 268. An N6-acetyllysine; alternate modification is found at Lys-281. Lys-281 is covalently cross-linked (Glycyl lysine isopeptide (Lys-Gly) (interchain with G-Cter in SUMO2); alternate). Residues Asp-370–Asp-373 carry the DEAD box motif. Phosphoserine is present on Ser-481. The 189-residue stretch at Lys-493–Val-681 folds into the Helicase C-terminal domain. Residues Tyr-525 to Phe-740 are necessary for interaction with HNRNPK.

This sequence belongs to the DEAD box helicase family. DDX1 subfamily. As to quaternary structure, found in a multi-helicase-TICAM1 complex at least composed of DHX36, DDX1, DDX21 and TICAM1; this complex exists in resting cells with or without poly(I:C) RNA ligand stimulation. Interacts with DHX36. Interacts (via B30.2/SPRY domain) with DDX21 (via N-terminus); this interaction serves as bridges to TICAM1. Interacts with FAM98A (via N- and C-terminus). Interacts with MBNL1. Interacts with CSTF2. Interacts with HNRNPK. Interacts with ATM. Interacts with RELA (via C-terminus). Component of the tRNA-splicing ligase complex. Interacts with PHF5A (via C-terminus). Interacts with PQBP1. Interacts with ERCC6. Post-translationally, phosphorylated by ATM kinase; phosphorylation is increased in response to ionizing radiation (IR). Testis-specific. Expressed in the germ line stem cells, spermatogonia and spermatocytes of the testis. Also expressed in the seminoma and nonseminoma types of testicular germ cell tumors (TGCTs) (at protein level).

Its subcellular location is the nucleus. The protein localises to the cytoplasm. It localises to the cytosol. The protein resides in the cytoplasmic granule. It is found in the mitochondrion. The enzyme catalyses ATP + H2O = ADP + phosphate + H(+). Acts as an ATP-dependent RNA helicase, able to unwind both RNA-RNA and RNA-DNA duplexes. Possesses 5' single-stranded RNA overhang nuclease activity. Possesses ATPase activity on various RNA, but not DNA polynucleotides. May play a role in RNA clearance at DNA double-strand breaks (DSBs), thereby facilitating the template-guided repair of transcriptionally active regions of the genome. Together with RELA, acts as a coactivator to enhance NF-kappa-B-mediated transcriptional activation. Acts as a positive transcriptional regulator of cyclin CCND2 expression. Binds to the cyclin CCND2 promoter region. Associates with chromatin at the NF-kappa-B promoter region via association with RELA. Binds to poly(A) RNA. May be involved in 3'-end cleavage and polyadenylation of pre-mRNAs. Component of the tRNA-splicing ligase complex required to facilitate the enzymatic turnover of catalytic subunit RTCB: together with archease (ZBTB8OS), acts by facilitating the guanylylation of RTCB, a key intermediate step in tRNA ligation. Component of a multi-helicase-TICAM1 complex that acts as a cytoplasmic sensor of viral double-stranded RNA (dsRNA) and plays a role in the activation of a cascade of antiviral responses including the induction of pro-inflammatory cytokines via the adapter molecule TICAM1. Specifically binds (via helicase ATP-binding domain) on both short and long poly(I:C) dsRNA. This Mus musculus (Mouse) protein is ATP-dependent RNA helicase DDX1 (Ddx1).